The chain runs to 352 residues: Popeye domain-containing protein 1 (352 aa).

Over 1–38 (MSNTTSALPSSVPAVSLDPNATLCQDWEQSHHLLFHLA) the chain is Extracellular. 2 N-linked (GlcNAc...) asparagine glycosylation sites follow: asparagine 3 and asparagine 20. A helical membrane pass occupies residues 39–59 (NLSLGLGFLIPTTLALHMIFL). A topological domain (cytoplasmic) is located at residue arginine 60. Residues 61 to 81 (LLLMTGCSLFIAWATLYRCTL) form a helical membrane-spanning segment. Residue aspartate 82 is a topological domain, extracellular. Residues 83–103 (VMVWNVVFLLVNFMHFFFLLY) form a helical membrane-spanning segment. The Cytoplasmic segment spans residues 104–352 (KRRPIKIDRE…NVSKTTKKDI (249 aa)). A disordered region spans residues 299 to 352 (ILRGGSTGSSLQKNPLTKTSTTMKPIEEGLEDDVFESESPTTSQNVSKTTKKDI). Polar residues-rich tracts occupy residues 306-321 (GSSL…STTM) and 336-346 (ESPTTSQNVSK).

Belongs to the popeye family. In terms of tissue distribution, expressed in skeletal muscle (at protein level).

Its subcellular location is the lateral cell membrane. The protein resides in the cell junction. It localises to the tight junction. The protein localises to the membrane. It is found in the cell membrane. Its subcellular location is the sarcolemma. The protein resides in the caveola. Cell adhesion molecule involved in the establishment and/or maintenance of cell integrity. Involved in skeletal muscle and heart development as well as in the maintenance of heart function. May play a role in vamp3-mediated vesicular transport and recycling of receptor molecules. Involved in the formation and regulation of the tight junction (TJ) paracellular permeability barrier in epithelial cells. May induce primordial adhesive contact and aggregation of epithelial cells in a Ca(2+)-independent manner. May be involved in epithelial movement during corneal sheet formation and regeneration. May play a role in the regulation of cell shape and movement by modulating the Rho-GTPase activity. May also be involved in striated muscle regeneration and in the regulation of cell spreading. The polypeptide is Popeye domain-containing protein 1 (popdc1) (Danio rerio (Zebrafish)).